The chain runs to 542 residues: MTTQTPPITNPSEKLPTEPINKALNRQMLVILDFGSQYSELIARRIRETQVYSEVLSYRTTIEQIRQLNPRGIILSGGPNSVYDNRAPQCDPEIFHLGVPILGVCYGMQLMVQQLGGQVERAKRGEYGKASLFIDDPTDLLTNVEDGSTMWMSHGDSCTQLPEGFDILAHTENTSCAAIAHHQKKLFGVQFHPEVVHSVGGIALIRNFVYHICQCEPTWTTEAFVEESIREIRAKVGDKRVLLALSGGVDSSTLAFLLHRAIGDNLTCMFIDQGFMRKGEPERLVEIFDKQFHIPVEYVNARTRFLEQLAGVTDPETKRRLIGHEFIQVFEEESERLGPFDYLAQGTLYPDVIESADTNVDPQTGERVAVKIKSHHNVGGLPKNLRFKLVEPLRKLFKDEVRKLGRAIGLPEEIVRRHPFPGPGLAIRIIGEVTAERLNILRDADFIVRDEISKQGMYHDFWQAFAVLLPVRSVGVMGDRRTYAHPIVLRLITSEDGMTADWAKVPYDLLETISNRIVNEVKGVNRVVYDITSKPPGTIEWE.

The Glutamine amidotransferase type-1 domain maps to 28 to 218 (MLVILDFGSQ…VYHICQCEPT (191 aa)). Cys-105 acts as the Nucleophile in catalysis. Residues His-192 and Glu-194 contribute to the active site. The region spanning 219–417 (WTTEAFVEES…IGLPEEIVRR (199 aa)) is the GMPS ATP-PPase domain. 246-252 (SGGVDSS) is an ATP binding site.

In terms of assembly, homodimer.

It carries out the reaction XMP + L-glutamine + ATP + H2O = GMP + L-glutamate + AMP + diphosphate + 2 H(+). It functions in the pathway purine metabolism; GMP biosynthesis; GMP from XMP (L-Gln route): step 1/1. In terms of biological role, catalyzes the synthesis of GMP from XMP. The chain is GMP synthase [glutamine-hydrolyzing] from Rippkaea orientalis (strain PCC 8801 / RF-1) (Cyanothece sp. (strain PCC 8801)).